Consider the following 201-residue polypeptide: Potassium-transporting ATPase KdpC subunit (201 aa).

Residues 17–37 (LLTGLAYPLAMTGLAGILFPV) form a helical membrane-spanning segment.

The protein belongs to the KdpC family. In terms of assembly, the system is composed of three essential subunits: KdpA, KdpB and KdpC.

It localises to the cell inner membrane. Functionally, part of the high-affinity ATP-driven potassium transport (or Kdp) system, which catalyzes the hydrolysis of ATP coupled with the electrogenic transport of potassium into the cytoplasm. This subunit acts as a catalytic chaperone that increases the ATP-binding affinity of the ATP-hydrolyzing subunit KdpB by the formation of a transient KdpB/KdpC/ATP ternary complex. The polypeptide is Potassium-transporting ATPase KdpC subunit (Methylobacterium nodulans (strain LMG 21967 / CNCM I-2342 / ORS 2060)).